The primary structure comprises 324 residues: GTPase Era (324 aa).

One can recognise an Era-type G domain in the interval 31-199 (KSGFIGIIGR…QELLVEHLEH (169 aa)). The G1 stretch occupies residues 39 to 46 (GRPNVGKS). A GTP-binding site is contributed by 39-46 (GRPNVGKS). Residues 65–69 (QTTRN) form a G2 region. The interval 86–89 (DTPG) is G3. Residues 86–90 (DTPGI) and 148–151 (NKVD) each bind GTP. A G4 region spans residues 148–151 (NKVD). The tract at residues 178-180 (FSA) is G5. Residues 230–306 (TREEVPHSVA…YLELFVKVQP (77 aa)) form the KH type-2 domain.

It belongs to the TRAFAC class TrmE-Era-EngA-EngB-Septin-like GTPase superfamily. Era GTPase family. In terms of assembly, monomer.

It localises to the cytoplasm. Its subcellular location is the cell inner membrane. An essential GTPase that binds both GDP and GTP, with rapid nucleotide exchange. Plays a role in 16S rRNA processing and 30S ribosomal subunit biogenesis and possibly also in cell cycle regulation and energy metabolism. The chain is GTPase Era from Nostoc sp. (strain PCC 7120 / SAG 25.82 / UTEX 2576).